Reading from the N-terminus, the 194-residue chain is RFKKIRRLGALPGLTSKRPRSGSDLKNQLRSGKRSQYRIRLEEKQKLRFHYGLTERQLLKYVHMAGKAKGSTGQVLLQLLEMRLDNILFRLGMASTIPGARQLVNHRHILVNGRIVDIPSYRCKPRDIITTKDKERSKVLIQNYIASSSHEELPNHLTIDPLQYKGLVNQIIDSKWVGLKINELLVVEYYSRQT.

Residues 82–143 (MRLDNILFRL…KERSKVLIQN (62 aa)) form the S4 RNA-binding domain.

Belongs to the universal ribosomal protein uS4 family. Part of the 30S ribosomal subunit. Contacts protein S5. The interaction surface between S4 and S5 is involved in control of translational fidelity.

Its subcellular location is the plastid. The protein resides in the chloroplast. In terms of biological role, one of the primary rRNA binding proteins, it binds directly to 16S rRNA where it nucleates assembly of the body of the 30S subunit. Its function is as follows. With S5 and S12 plays an important role in translational accuracy. In Cypella sp. (strain Porto Alegre 027), this protein is Small ribosomal subunit protein uS4c (rps4).